A 422-amino-acid chain; its full sequence is RNA exonuclease 4 (422 aa).

The disordered stretch occupies residues 1 to 194 (MGKAKVPASK…APAPPTEEDI (194 aa)). The residue at position 15 (serine 15) is a Phosphoserine. Basic residues predominate over residues 26 to 40 (LTRKKNKKKKRFWKS). Serine 96 and serine 111 each carry phosphoserine. Basic and acidic residues-rich tracts occupy residues 106–127 (NKKE…DQEA) and 151–176 (GTEH…DIEH). Residue lysine 115 forms a Glycyl lysine isopeptide (Lys-Gly) (interchain with G-Cter in SUMO2) linkage. Residues 243 to 394 (ALALDCEMVG…QDAQAAMRLY (152 aa)) form the Exonuclease domain.

Belongs to the REXO4 family. In terms of assembly, can bind ESR1 and ESR2. This interaction is abrogated by estrogen and augmented by tamoxifen treatment.

It is found in the nucleus. The protein localises to the nucleolus. This Homo sapiens (Human) protein is RNA exonuclease 4 (REXO4).